Consider the following 206-residue polypeptide: Sortase A (206 aa).

At 1-6 (MKKWTN) the chain is on the cytoplasmic side. A helical membrane pass occupies residues 7-24 (RLMTIAGVVLILVAAYLF). Residues 25 to 206 (AKPHIDNYLH…RKIFVATEVK (182 aa)) lie on the Extracellular side of the membrane. The disordered stretch occupies residues 49-69 (VKEQASKDKKQQAKPQIPKDK). Ca(2+) is bound by residues Glu-105, Glu-108, Asp-112, and Asn-114. The Proton donor/acceptor role is filled by His-120. Glu-171 contacts Ca(2+). Cys-184 acts as the Acyl-thioester intermediate in catalysis.

The protein belongs to the bacterial sortase family. Class A subfamily. Monomer and homodimer; in equilibrium.

It localises to the cell membrane. The enzyme catalyses The enzyme catalyzes a cell wall sorting reaction in which a surface protein with a sorting signal containing a LPXTG motif is cleaved between the Thr and Gly residue. The resulting threonine carboxyl end of the protein is covalently attached to a pentaglycine cross-bridge of peptidoglycan.. With respect to regulation, sortase activity is regulated by monomer-homodimer equilibrium. Mutant cells with monomeric SrtA display more adhesive proteins on the cell surface and are more invasive than wild-type cells, which have majority of SrtA in dimeric form. Dimerization may suppress the enzymatic activity on cell membranes. Stimulated by calcium ions, which promote substrate binding. Calcium ions bind to SrtA and modulate both the structure and dynamics of a large active site loop. Can also be stimulated, to a lesser extent, by Mg(2+) and Mn(2+). Inhibited by sulfhydryl-modifying reagents. Functionally, transpeptidase that anchors surface proteins to the cell wall. Recognizes and modifies its substrate by proteolytic cleavage of a C-terminal sorting signal. Following cleavage, a covalent intermediate is formed via a thioester bond between the sortase and its substrate, which is then transferred and covalently attached to the cell wall. This sortase recognizes a Leu-Pro-x-Thr-Gly (LPXTG) motif, which is cleaved by the sortase between the threonine and glycine residues. Utilizes lipid II as the peptidoglycan substrate for the sorting reaction. Responsible for the display of important virulence factors. Important for interactions with the host and host colonization during infection. The chain is Sortase A from Staphylococcus aureus (strain NCTC 8325 / PS 47).